The sequence spans 177 residues: Actinorhodin polyketide dimerase (177 aa).

This sequence to S.pristinaespiralis SnaC.

It participates in antibiotic biosynthesis; actinorhodin biosynthesis. The protein is Actinorhodin polyketide dimerase (actVB) of Streptomyces coelicolor (strain ATCC BAA-471 / A3(2) / M145).